The primary structure comprises 82 residues: MGRQFGHLTRVRHVITYSLSPFEQRAFPHYFSKGIPNVLRRTRACILRVAPPFVAFYLVYTWGTQEFEKSKRKNPAAYENDR.

The Mitochondrial matrix segment spans residues 2 to 39 (GRQFGHLTRVRHVITYSLSPFEQRAFPHYFSKGIPNVL). N6-acetyllysine; alternate is present on lysine 33. The residue at position 33 (lysine 33) is an N6-succinyllysine; alternate. The chain crosses the membrane as a helical span at residues 40-68 (RRTRACILRVAPPFVAFYLVYTWGTQEFE). Topologically, residues 69–82 (KSKRKNPAAYENDR) are mitochondrial intermembrane.

It belongs to the UQCRQ/QCR8 family. Component of the ubiquinol-cytochrome c oxidoreductase (cytochrome b-c1 complex, complex III, CIII), a multisubunit enzyme composed of 11 subunits. The complex is composed of 3 respiratory subunits cytochrome b, cytochrome c1 and Rieske protein UQCRFS1, 2 core protein subunits UQCRC1/QCR1 and UQCRC2/QCR2, and 6 low-molecular weight protein subunits UQCRH/QCR6, UQCRB/QCR7, UQCRQ/QCR8, UQCR10/QCR9, UQCR11/QCR10 and subunit 9, the cleavage product of Rieske protein UQCRFS1. The complex exists as an obligatory dimer and forms supercomplexes (SCs) in the inner mitochondrial membrane with NADH-ubiquinone oxidoreductase (complex I, CI) and cytochrome c oxidase (complex IV, CIV), resulting in different assemblies (supercomplex SCI(1)III(2)IV(1) and megacomplex MCI(2)III(2)IV(2)). Interacts with UQCC6.

The protein localises to the mitochondrion inner membrane. Its function is as follows. Component of the ubiquinol-cytochrome c oxidoreductase, a multisubunit transmembrane complex that is part of the mitochondrial electron transport chain which drives oxidative phosphorylation. The respiratory chain contains 3 multisubunit complexes succinate dehydrogenase (complex II, CII), ubiquinol-cytochrome c oxidoreductase (cytochrome b-c1 complex, complex III, CIII) and cytochrome c oxidase (complex IV, CIV), that cooperate to transfer electrons derived from NADH and succinate to molecular oxygen, creating an electrochemical gradient over the inner membrane that drives transmembrane transport and the ATP synthase. The cytochrome b-c1 complex catalyzes electron transfer from ubiquinol to cytochrome c, linking this redox reaction to translocation of protons across the mitochondrial inner membrane, with protons being carried across the membrane as hydrogens on the quinol. In the process called Q cycle, 2 protons are consumed from the matrix, 4 protons are released into the intermembrane space and 2 electrons are passed to cytochrome c. This Bos taurus (Bovine) protein is Cytochrome b-c1 complex subunit 8 (UQCRQ).